The chain runs to 581 residues: MLQGWIQIALTILIIVAITPFFGRYMARVFMERRTLLDPLCDRVESLLYTFVGVKGKENMTGWQYTRAVLYSNAVIAILVFSLIAGQGVLPLNPTGIPAPSWDTTLHTTISFITNSDQQHYSGETTLSYGSQIWGLGYQMFTSAGTGLAVGIAFIRGLTGRPLGNFYVDLIRAITRILLPISIVGAIALIIAGVPETLAGPAILPTLENPNLSQAIARGPVAHFEIIKELGENGGGFFASNSAHPFENPNGFVNLVQLVAILSIPTSLIYTYGVFADNLKQARLIYLIPLGIFIGFTIITAIGEYNGNQAVNSLLGVERAVNFEGKEVRFGWAQSALYAVTTTATMCGAVIAMHDSLMPNGGFATLSNLFLQIVFGGQGTGTAYLFAYLILAVFVTGLMVGRTPEFLGRKIEKREVVLASFLILLVHPIAILIPGAIALAFPDFQGISNPGFHGLSQVIYEYASAAANNGSGFEGLGDSQPAPLAIAAGAKPTITALWWNLSACFSLLAGRYIPIAALLLLADGMSRKQPVPATTGTLRTDTGLFTSVTAGVILILGALTFLPILALGPIAEAFQITRMIG.

The next 12 membrane-spanning stretches (helical) occupy residues 2 to 22 (LQGWIQIALTILIIVAITPFF), 74 to 94 (AVIAILVFSLIAGQGVLPLNP), 135 to 155 (GLGYQMFTSAGTGLAVGIAFI), 177 to 197 (ILLPISIVGAIALIIAGVPET), 255 to 275 (LVQLVAILSIPTSLIYTYGVF), 284 to 304 (LIYLIPLGIFIGFTIITAIGE), 332 to 352 (WAQSALYAVTTTATMCGAVIA), 357 to 377 (LMPNGGFATLSNLFLQIVFGG), 381 to 401 (GTAYLFAYLILAVFVTGLMVG), 421 to 441 (FLILLVHPIAILIPGAIALAF), 501 to 521 (LSACFSLLAGRYIPIAALLLL), and 550 to 570 (AGVILILGALTFLPILALGPI).

This sequence belongs to the KdpA family. In terms of assembly, the system is composed of three essential subunits: KdpA, KdpB and KdpC.

The protein resides in the cell inner membrane. Functionally, part of the high-affinity ATP-driven potassium transport (or Kdp) system, which catalyzes the hydrolysis of ATP coupled with the electrogenic transport of potassium into the cytoplasm. This subunit binds the periplasmic potassium ions and delivers the ions to the membrane domain of KdpB through an intramembrane tunnel. The protein is Potassium-transporting ATPase potassium-binding subunit of Microcystis aeruginosa (strain NIES-843 / IAM M-2473).